We begin with the raw amino-acid sequence, 375 residues long: Actin, cytoplasmic (375 aa).

This sequence belongs to the actin family.

The protein resides in the cytoplasm. It is found in the cytoskeleton. It carries out the reaction ATP + H2O = ADP + phosphate + H(+). In terms of biological role, actins are highly conserved proteins that are involved in various types of cell motility and are ubiquitously expressed in all eukaryotic cells. This Sterkiella nova (Ciliate) protein is Actin, cytoplasmic.